A 229-amino-acid polypeptide reads, in one-letter code: 2-C-methyl-D-erythritol 4-phosphate cytidylyltransferase (229 aa).

It belongs to the IspD/TarI cytidylyltransferase family. IspD subfamily.

The enzyme catalyses 2-C-methyl-D-erythritol 4-phosphate + CTP + H(+) = 4-CDP-2-C-methyl-D-erythritol + diphosphate. Its pathway is isoprenoid biosynthesis; isopentenyl diphosphate biosynthesis via DXP pathway; isopentenyl diphosphate from 1-deoxy-D-xylulose 5-phosphate: step 2/6. In terms of biological role, catalyzes the formation of 4-diphosphocytidyl-2-C-methyl-D-erythritol from CTP and 2-C-methyl-D-erythritol 4-phosphate (MEP). The protein is 2-C-methyl-D-erythritol 4-phosphate cytidylyltransferase of Clostridium acetobutylicum (strain ATCC 824 / DSM 792 / JCM 1419 / IAM 19013 / LMG 5710 / NBRC 13948 / NRRL B-527 / VKM B-1787 / 2291 / W).